The chain runs to 561 residues: Carboxylesterase 1F (561 aa).

The N-terminal stretch at 1–17 (MFLSTLFLVSLATCVIC) is a signal peptide. Cys87 and Cys116 form a disulfide bridge. Ser221 (acyl-ester intermediate) is an active-site residue. The cysteines at positions 273 and 284 are disulfide-linked. Residues Glu353 and His466 each act as charge relay system in the active site. The Prevents secretion from ER signature appears at 558 to 561 (HNEL).

The protein belongs to the type-B carboxylesterase/lipase family. As to expression, expressed in liver, white and brown adipose tissue, kidney, intestine, adrenal, heart and ovary. Not detected in muscle, lung, testis, brain and spleen.

It is found in the lipid droplet. The protein resides in the cytoplasm. The protein localises to the cytosol. It localises to the endoplasmic reticulum. Its subcellular location is the microsome. The enzyme catalyses a carboxylic ester + H2O = an alcohol + a carboxylate + H(+). It carries out the reaction all-trans-retinyl hexadecanoate + H2O = all-trans-retinol + hexadecanoate + H(+). In terms of biological role, involved in the detoxification of xenobiotics and in the activation of ester and amide prodrugs. Hydrolyzes retinyl esters. Hydrolyzes p-nitrophenyl butyrate (PNPB), triacylglycerol and monoacylglycerol. Shows higher activity against PNPB, a short-chain fatty acid ester, than against triolein, a long-chain fatty acid ester. Shows no detectable activity against diacylglycerol, cholesterol ester or phospholipids. May play a role in adipocyte lipolysis. This chain is Carboxylesterase 1F, found in Mus musculus (Mouse).